Here is a 354-residue protein sequence, read N- to C-terminus: UDP-3-O-acylglucosamine N-acyltransferase (354 aa).

H247 (proton acceptor) is an active-site residue.

Belongs to the transferase hexapeptide repeat family. LpxD subfamily. In terms of assembly, homotrimer.

It catalyses the reaction a UDP-3-O-[(3R)-3-hydroxyacyl]-alpha-D-glucosamine + a (3R)-hydroxyacyl-[ACP] = a UDP-2-N,3-O-bis[(3R)-3-hydroxyacyl]-alpha-D-glucosamine + holo-[ACP] + H(+). The protein operates within bacterial outer membrane biogenesis; LPS lipid A biosynthesis. Functionally, catalyzes the N-acylation of UDP-3-O-acylglucosamine using 3-hydroxyacyl-ACP as the acyl donor. Is involved in the biosynthesis of lipid A, a phosphorylated glycolipid that anchors the lipopolysaccharide to the outer membrane of the cell. This chain is UDP-3-O-acylglucosamine N-acyltransferase, found in Chlamydia trachomatis serovar L2 (strain ATCC VR-902B / DSM 19102 / 434/Bu).